Consider the following 194-residue polypeptide: Orotate phosphoribosyltransferase (194 aa).

117-125 (EDIVSTGLS) serves as a coordination point for 5-phospho-alpha-D-ribose 1-diphosphate. Orotate contacts are provided by serine 121 and arginine 149.

It belongs to the purine/pyrimidine phosphoribosyltransferase family. PyrE subfamily. In terms of assembly, homodimer. Mg(2+) serves as cofactor.

The catalysed reaction is orotidine 5'-phosphate + diphosphate = orotate + 5-phospho-alpha-D-ribose 1-diphosphate. It participates in pyrimidine metabolism; UMP biosynthesis via de novo pathway; UMP from orotate: step 1/2. Functionally, catalyzes the transfer of a ribosyl phosphate group from 5-phosphoribose 1-diphosphate to orotate, leading to the formation of orotidine monophosphate (OMP). This is Orotate phosphoribosyltransferase from Maricaulis maris (strain MCS10) (Caulobacter maris).